The chain runs to 947 residues: Bifunctional glutamine synthetase adenylyltransferase/adenylyl-removing enzyme (947 aa).

The interval 1-440 (MTPLSSPLSQ…VFNELIGDDE (440 aa)) is adenylyl removase. The tract at residues 450 to 947 (SEPWREVWQD…ASWRKWLVAV (498 aa)) is adenylyl transferase.

Belongs to the GlnE family. Mg(2+) is required as a cofactor.

The enzyme catalyses [glutamine synthetase]-O(4)-(5'-adenylyl)-L-tyrosine + phosphate = [glutamine synthetase]-L-tyrosine + ADP. It catalyses the reaction [glutamine synthetase]-L-tyrosine + ATP = [glutamine synthetase]-O(4)-(5'-adenylyl)-L-tyrosine + diphosphate. In terms of biological role, involved in the regulation of glutamine synthetase GlnA, a key enzyme in the process to assimilate ammonia. When cellular nitrogen levels are high, the C-terminal adenylyl transferase (AT) inactivates GlnA by covalent transfer of an adenylyl group from ATP to specific tyrosine residue of GlnA, thus reducing its activity. Conversely, when nitrogen levels are low, the N-terminal adenylyl removase (AR) activates GlnA by removing the adenylyl group by phosphorolysis, increasing its activity. The regulatory region of GlnE binds the signal transduction protein PII (GlnB) which indicates the nitrogen status of the cell. The chain is Bifunctional glutamine synthetase adenylyltransferase/adenylyl-removing enzyme from Salmonella heidelberg (strain SL476).